Here is a 510-residue protein sequence, read N- to C-terminus: NAD(P)H-quinone oxidoreductase subunit 2 A, chloroplastic (510 aa).

13 consecutive transmembrane segments (helical) span residues Leu24–Leu44, Ile57–Phe77, Ile99–Ile119, Met124–Cys144, Leu149–Tyr169, Tyr183–Gly203, Pro227–Ala247, Trp295–Ile315, Met323–Asp343, Tyr354–Leu374, Ala395–Phe415, Leu418–Leu438, and Met484–Ile504.

It belongs to the complex I subunit 2 family. As to quaternary structure, NDH is composed of at least 16 different subunits, 5 of which are encoded in the nucleus.

The protein localises to the plastid. The protein resides in the chloroplast thylakoid membrane. It catalyses the reaction a plastoquinone + NADH + (n+1) H(+)(in) = a plastoquinol + NAD(+) + n H(+)(out). The catalysed reaction is a plastoquinone + NADPH + (n+1) H(+)(in) = a plastoquinol + NADP(+) + n H(+)(out). NDH shuttles electrons from NAD(P)H:plastoquinone, via FMN and iron-sulfur (Fe-S) centers, to quinones in the photosynthetic chain and possibly in a chloroplast respiratory chain. The immediate electron acceptor for the enzyme in this species is believed to be plastoquinone. Couples the redox reaction to proton translocation, and thus conserves the redox energy in a proton gradient. The polypeptide is NAD(P)H-quinone oxidoreductase subunit 2 A, chloroplastic (Vitis vinifera (Grape)).